The chain runs to 150 residues: Small heat shock protein HspE (150 aa).

Residues 27 to 137 (VDNGDTYPPY…KPRQIAIDVA (111 aa)) form the sHSP domain.

The protein belongs to the small heat shock protein (HSP20) family.

This is Small heat shock protein HspE (hspE) from Bradyrhizobium diazoefficiens (strain JCM 10833 / BCRC 13528 / IAM 13628 / NBRC 14792 / USDA 110).